Here is a 321-residue protein sequence, read N- to C-terminus: NADH-ubiquinone oxidoreductase chain 1 (321 aa).

Transmembrane regions (helical) follow at residues 6 to 26, 67 to 87, 103 to 123, 143 to 163, 174 to 194, 220 to 240, 256 to 276, and 296 to 316; these read IVPPALLIISILMAVAFLTAL, LLATPTLFILAPTAALMLALA, LGLLLLLAMSSLMVYSFLWSG, ISYEVTLAIIVLSIVLLSGGF, PLYLALATWPSMMMWYTSTLA, ASPFALFFLAEYANIMLMNTL, ALFTIALMSKALLLTMSFLWV, and FLPMTLTLCLWHSSVPMSMFG.

The protein belongs to the complex I subunit 1 family.

The protein localises to the mitochondrion inner membrane. It carries out the reaction a ubiquinone + NADH + 5 H(+)(in) = a ubiquinol + NAD(+) + 4 H(+)(out). Functionally, core subunit of the mitochondrial membrane respiratory chain NADH dehydrogenase (Complex I) that is believed to belong to the minimal assembly required for catalysis. Complex I functions in the transfer of electrons from NADH to the respiratory chain. The immediate electron acceptor for the enzyme is believed to be ubiquinone. The protein is NADH-ubiquinone oxidoreductase chain 1 (MT-ND1) of Alligator mississippiensis (American alligator).